We begin with the raw amino-acid sequence, 681 residues long: Kojibiose hydrolase (681 aa).

The first 23 residues, 1–23 (MKKYIFNHVFFFLMLCGSNYLYS), serve as a signal peptide directing secretion. Residues R74, W343, D344, W391, E392, T407, E472, W473, K538, Q539, and D573 each coordinate beta-D-glucose. E472 (proton donor) is an active-site residue. Residue E616 is the Proton acceptor of the active site.

It belongs to the glycosyl hydrolase 65 family. As to quaternary structure, homohexamer; dimer of trimers.

It is found in the periplasm. The catalysed reaction is kojibiose + H2O = beta-D-glucose + D-glucose. In terms of biological role, glycosidase that specifically hydrolyzes kojibiose to beta-glucose and glucose. Also hydrolyzes, with lower catalytic efficiency, longer kojioligosaccharides (from kojitriose to kojipentaose) and shorter oligosaccharides produced by the degradation of dextran-containing alpha-1,2 branches. Probably acts on alpha-(1-&gt;2)-glucosyl isomaltooligosaccharides. Shows weak activity with nigerose but has no activity toward p-nitrophenyl alpha-glucopyranoside, which is a general substrate of exo-acting alpha-glucoside hydrolases. Has a strict specificity for alpha-1,2-glucosidic linkages. Catalyzes the hydrolytic reaction via an anomer-inverting mechanism. This Flavobacterium johnsoniae (strain ATCC 17061 / DSM 2064 / JCM 8514 / BCRC 14874 / CCUG 350202 / NBRC 14942 / NCIMB 11054 / UW101) (Cytophaga johnsonae) protein is Kojibiose hydrolase.